We begin with the raw amino-acid sequence, 764 residues long: Transient receptor potential cation channel subfamily V member 2 (764 aa).

A disordered region spans residues 1-46 (MTSPSSSPVFRLETLDGGQEDGSEADRGKLDFGSGLPPMESQFQGE). Positions 1–388 (MTSPSSSPVF…LLQAKWDLLI (388 aa)) are required for interaction with SLC50A1. Topologically, residues 1-390 (MTSPSSSPVF…QAKWDLLIPK (390 aa)) are cytoplasmic. Serine 6 is modified (phosphoserine). 6 ANK repeats span residues 72-114 (NRFD…TEGS), 115-161 (TGKT…DDYY), 162-207 (RGHS…TCFY), 208-243 (FGELPLSLAACTKQWDVVSYLLENPHQPASLQATDS), 244-292 (QGNT…IRNL), and 293-319 (QDLTPLKLAAKEGKIEIFRHILQREFS). Residues 391-411 (FFLNFLCNLIYMFIFTAVAYH) traverse the membrane as a helical segment. Residues 412-434 (QPTLKKQAAPHLKAEVGNSMLLT) are Extracellular-facing. The chain crosses the membrane as a helical span at residues 435–455 (GHILILLGGIYLLVGQLWYFW). Over 456–471 (RRHVFIWISFIDSYFE) the chain is Cytoplasmic. The chain crosses the membrane as a helical span at residues 472–492 (ILFLFQALLTVVSQVLCFLAI). A topological domain (extracellular) is located at residue glutamate 493. A helical membrane pass occupies residues 494 to 514 (WYLPLLVSALVLGWLNLLYYT). At 515–537 (RGFQHTGIYSVMIQKVILRDLLR) the chain is on the cytoplasmic side. Residues 538–558 (FLLIYLVFLFGFAVALVSLSQ) form a helical membrane-spanning segment. The interval 562–585 (RPEAPTGPNATESVQPMEGQEDEG) is disordered. The N-linked (GlcNAc...) asparagine glycan is linked to asparagine 570. An intramembrane region (pore-forming) is located at residues 572–609 (TESVQPMEGQEDEGNGAQYRGILEASLELFKFTIGMGE). A helical transmembrane segment spans residues 622-642 (VLLLLLAYVLLTYILLLNMLI). Residues 643-764 (ALMSETVNSV…YVPVQLLQSN (122 aa)) are Cytoplasmic-facing. Residues 725–756 (PSGAGVPRTLENPVLASPPKEDEDGASEENYV) form a disordered region. Serine 751 and serine 763 each carry phosphoserine.

It belongs to the transient receptor (TC 1.A.4) family. TrpV subfamily. TRPV2 sub-subfamily. Homotetramer. Interacts with a cAMP-dependent protein kinase type II regulatory subunit (PRKAR2A or PRKAR2B) and ACBD3. Interacts with SLC50A1; the interaction probably occurs intracellularly and depends on TRPV2 N-glycosylation. In terms of processing, N-glycosylated. Phosphorylated by PKA.

It localises to the cell membrane. It is found in the cytoplasm. The protein localises to the melanosome. It carries out the reaction Ca(2+)(in) = Ca(2+)(out). It catalyses the reaction Mg(2+)(in) = Mg(2+)(out). The enzyme catalyses Na(+)(in) = Na(+)(out). The catalysed reaction is K(+)(in) = K(+)(out). Its function is as follows. Calcium-permeable, non-selective cation channel with an outward rectification. Seems to be regulated, at least in part, by IGF1, PDGF and neuropeptide head activator. May transduce physical stimuli in mast cells. Activated by temperatures higher than 52 degrees Celsius; is not activated by vanilloids and acidic pH. This chain is Transient receptor potential cation channel subfamily V member 2 (TRPV2), found in Homo sapiens (Human).